The sequence spans 197 residues: Phosphoheptose isomerase (197 aa).

Positions 36 to 197 constitute an SIS domain; that stretch reads MTASLMNNGK…IDCLLLGVEE (162 aa). 51 to 53 serves as a coordination point for substrate; it reads NGG. 2 residues coordinate Zn(2+): histidine 60 and glutamate 64. Substrate is bound by residues glutamate 64, 93–94, 119–121, serine 124, and glutamine 174; these read ND and STS. The Zn(2+) site is built by glutamine 174 and histidine 182.

The protein belongs to the SIS family. GmhA subfamily. In terms of assembly, homotetramer. It depends on Zn(2+) as a cofactor.

The protein resides in the cytoplasm. The enzyme catalyses 2 D-sedoheptulose 7-phosphate = D-glycero-alpha-D-manno-heptose 7-phosphate + D-glycero-beta-D-manno-heptose 7-phosphate. It participates in carbohydrate biosynthesis; D-glycero-D-manno-heptose 7-phosphate biosynthesis; D-glycero-alpha-D-manno-heptose 7-phosphate and D-glycero-beta-D-manno-heptose 7-phosphate from sedoheptulose 7-phosphate: step 1/1. Catalyzes the isomerization of sedoheptulose 7-phosphate in D-glycero-D-manno-heptose 7-phosphate. The chain is Phosphoheptose isomerase from Azoarcus sp. (strain BH72).